A 488-amino-acid polypeptide reads, in one-letter code: Histamine H1 receptor (488 aa).

Over 1 to 29 the chain is Extracellular; sequence MSLPNTSSASEDKMCEGNRTAMASPQLLP. 2 N-linked (GlcNAc...) asparagine glycosylation sites follow: asparagine 5 and asparagine 18. Residues 30–50 form a helical membrane-spanning segment; sequence LVVVLSSISLVTVGLNLLVLY. Over 51 to 64 the chain is Cytoplasmic; the sequence is AVRSERKLHTVGNL. A helical transmembrane segment spans residues 65 to 89; it reads YIVSLSVADLIVGAVVMPMNILYLI. The Extracellular portion of the chain corresponds to 90-97; sequence MTKWSLGR. Residues 98–123 form a helical membrane-spanning segment; sequence PLCLFWLSMDYVASTASIFSVFILCI. Cysteine 100 and cysteine 180 form a disulfide bridge. Positions 107 and 112 each coordinate histamine. Residues 107–112 are important for agonist binding; it reads DYVAST. Over 124 to 144 the chain is Cytoplasmic; that stretch reads DRYRSVQQPLRYLRYRTKTRA. Phosphothreonine occurs at positions 140 and 142. The helical transmembrane segment at 145–164 threads the bilayer; it reads SATILGAWFLSFLWVIPILG. The Extracellular portion of the chain corresponds to 165–188; sequence WHHFTPLAPELREDKCETDFYNVT. A helical transmembrane segment spans residues 189–211; that stretch reads WFKIMTAIINFYLPTLLMLWFYV. Asparagine 198 is a histamine binding site. Residues 212-417 lie on the Cytoplasmic side of the membrane; it reads KIYKAVRRHC…LNRERKAAKQ (206 aa). The residue at position 230 (serine 230) is a Phosphoserine. The tract at residues 245–337 is disordered; sequence KEGAKKPGKE…SQPKMDEQSL (93 aa). A compositionally biased stretch (polar residues) spans 322 to 337; sequence ANDQTLSQPKMDEQSL. Serine 344, serine 347, serine 381, serine 383, serine 397, and serine 399 each carry phosphoserine. A helical membrane pass occupies residues 418 to 441; the sequence is LGCIMAAFILCWIPYFIFFMVIAF. The segment at 425 to 429 is important for agonist binding; sequence FILCW. Tyrosine 432 contributes to the histamine binding site. Cysteines 442 and 445 form a disulfide. At 442–447 the chain is on the extracellular side; the sequence is CNSCCS. A helical membrane pass occupies residues 448 to 470; it reads EPVHMFTIWLGYINSTLNPLIYP. Over 471 to 488 the chain is Cytoplasmic; sequence LCNENFKKTFKKILHIRS.

This sequence belongs to the G-protein coupled receptor 1 family. Post-translationally, phosphorylation at sites in the second and third cytoplasmic loops independently contribute to agonist-induced receptor down-regulation.

Its subcellular location is the cell membrane. Functionally, G-protein-coupled receptor for histamine, a biogenic amine that functions as an immune modulator and a neurotransmitter. Through the H1 receptor, histamine mediates the contraction of smooth muscles and increases capillary permeability due to contraction of terminal venules. Also mediates neurotransmission in the central nervous system and thereby regulates circadian rhythms, emotional and locomotor activities as well as cognitive functions. This chain is Histamine H1 receptor, found in Mus musculus (Mouse).